We begin with the raw amino-acid sequence, 221 residues long: Thiamine-phosphate synthase (221 aa).

4-amino-2-methyl-5-(diphosphooxymethyl)pyrimidine-binding positions include 46–50 (QFREK) and Asn83. 2 residues coordinate Mg(2+): Asp84 and Asp103. Ser122 serves as a coordination point for 4-amino-2-methyl-5-(diphosphooxymethyl)pyrimidine. Position 149–151 (149–151 (TQS)) interacts with 2-[(2R,5Z)-2-carboxy-4-methylthiazol-5(2H)-ylidene]ethyl phosphate. Residue Lys152 coordinates 4-amino-2-methyl-5-(diphosphooxymethyl)pyrimidine. Residues Gly181 and 201–202 (IS) each bind 2-[(2R,5Z)-2-carboxy-4-methylthiazol-5(2H)-ylidene]ethyl phosphate.

It belongs to the thiamine-phosphate synthase family. The cofactor is Mg(2+).

The catalysed reaction is 2-[(2R,5Z)-2-carboxy-4-methylthiazol-5(2H)-ylidene]ethyl phosphate + 4-amino-2-methyl-5-(diphosphooxymethyl)pyrimidine + 2 H(+) = thiamine phosphate + CO2 + diphosphate. The enzyme catalyses 2-(2-carboxy-4-methylthiazol-5-yl)ethyl phosphate + 4-amino-2-methyl-5-(diphosphooxymethyl)pyrimidine + 2 H(+) = thiamine phosphate + CO2 + diphosphate. It catalyses the reaction 4-methyl-5-(2-phosphooxyethyl)-thiazole + 4-amino-2-methyl-5-(diphosphooxymethyl)pyrimidine + H(+) = thiamine phosphate + diphosphate. It functions in the pathway cofactor biosynthesis; thiamine diphosphate biosynthesis; thiamine phosphate from 4-amino-2-methyl-5-diphosphomethylpyrimidine and 4-methyl-5-(2-phosphoethyl)-thiazole: step 1/1. Condenses 4-methyl-5-(beta-hydroxyethyl)thiazole monophosphate (THZ-P) and 2-methyl-4-amino-5-hydroxymethyl pyrimidine pyrophosphate (HMP-PP) to form thiamine monophosphate (TMP). The polypeptide is Thiamine-phosphate synthase (Actinobacillus succinogenes (strain ATCC 55618 / DSM 22257 / CCUG 43843 / 130Z)).